The sequence spans 766 residues: AMP deaminase 3 (766 aa).

2 positions are modified to phosphoserine: S85 and S107. Residues 89 to 114 are disordered; it reads QMPTQQDWKGPPTASPAMSPATPLVP. The segment covering 99 to 110 has biased composition (low complexity); it reads PPTASPAMSPAT. 2 residues coordinate Zn(2+): H316 and H318. Substrate-binding positions include H318 and 387–392; that span reads KFNSKY. H585 serves as a coordination point for Zn(2+). E588 is a substrate binding site. H607 functions as the Proton acceptor in the catalytic mechanism. Residue D662 participates in Zn(2+) binding. 663-666 lines the substrate pocket; the sequence is DPMQ.

It belongs to the metallo-dependent hydrolases superfamily. Adenosine and AMP deaminases family. As to quaternary structure, homotetramer. The cofactor is Zn(2+). As to expression, found in heart, lung brain, spleen, kidney and to a lesser extent in liver.

It carries out the reaction AMP + H2O + H(+) = IMP + NH4(+). The protein operates within purine metabolism; IMP biosynthesis via salvage pathway; IMP from AMP: step 1/1. AMP deaminase plays a critical role in energy metabolism. The protein is AMP deaminase 3 of Mus musculus (Mouse).